The sequence spans 372 residues: MQFFTAIAAISALVAPALALPTQELPQAPTNQTLHVRLIPTGNTMVKAVVTNNGDRPLNLLKFNTIMDENPTAKVNVVHEDGEEVEFTGMLPRYSMRSLPKSVFTRLAPKDSVEHVFDIATVHNLKRSGKYTLSARGAVPVAEGDDTAIIDHVYYQSNDLTMEIDARKAALIPRAFEDTHFAGTLNRRGGLNSTCSPRRYQVIKRALNDARMIASSASKAVSSNPEKFREFFGTTDPNAMKQVSERLMAIAQASVENGPIKWHCFDSRGRCEQNVVAYTLPSRNEVFPCMPFFTESDFTNKCHAQDKPTTLIHEAAHNPSVVQPFCRDHGYGYDHVSRLPPRLALQNADNYSIYAQGKFHLHLPLKVVFSPN.

The first 19 residues, 1-19 (MQFFTAIAAISALVAPALA), serve as a signal peptide directing secretion. The propeptide occupies 20–188 (LPTQELPQAP…THFAGTLNRR (169 aa)). 2 cysteine pairs are disulfide-bonded: cysteine 195–cysteine 264 and cysteine 271–cysteine 289. Zn(2+) is bound at residue histidine 313. Residue glutamate 314 is part of the active site. Zn(2+) contacts are provided by histidine 317 and aspartate 328.

The protein belongs to the peptidase M35 family. Zn(2+) serves as cofactor.

Its subcellular location is the secreted. It catalyses the reaction Preferential cleavage of bonds with hydrophobic residues in P1'. Also 3-Asn-|-Gln-4 and 8-Gly-|-Ser-9 bonds in insulin B chain.. Its function is as follows. Secreted metalloproteinase that allows assimilation of proteinaceous substrates. Shows high activities on basic nuclear substrates such as histone and protamine. May be involved in virulence. This Arthroderma gypseum (strain ATCC MYA-4604 / CBS 118893) (Microsporum gypseum) protein is Neutral protease 2 homolog MGYG_06241.